Here is a 349-residue protein sequence, read N- to C-terminus: Fe(3+) ions import ATP-binding protein FbpC (349 aa).

Positions 7–237 (LVLKNVTKAF…PNSLFLANFM (231 aa)) constitute an ABC transporter domain. Position 39-46 (39-46 (GPSGCGKT)) interacts with ATP.

Belongs to the ABC transporter superfamily. Fe(3+) ion importer (TC 3.A.1.10) family. The complex is composed of two ATP-binding proteins (FbpC), two transmembrane proteins (FbpB) and a solute-binding protein (FbpA).

It is found in the cell inner membrane. The enzyme catalyses Fe(3+)(out) + ATP + H2O = Fe(3+)(in) + ADP + phosphate + H(+). In terms of biological role, part of the ABC transporter complex FbpABC involved in Fe(3+) ions import. Responsible for energy coupling to the transport system. In Pasteurella multocida (strain Pm70), this protein is Fe(3+) ions import ATP-binding protein FbpC.